The following is a 430-amino-acid chain: Ribosomal protein uS12 methylthiotransferase RimO (430 aa).

The MTTase N-terminal domain occupies M1–D116. 6 residues coordinate [4Fe-4S] cluster: C10, C46, C79, C148, C152, and C155. One can recognise a Radical SAM core domain in the interval L134–R365. The region spanning D367 to I430 is the TRAM domain.

The protein belongs to the methylthiotransferase family. RimO subfamily. In terms of assembly, monomer. [4Fe-4S] cluster is required as a cofactor.

Its subcellular location is the cytoplasm. It carries out the reaction L-aspartate(89)-[ribosomal protein uS12]-hydrogen + (sulfur carrier)-SH + AH2 + 2 S-adenosyl-L-methionine = 3-methylsulfanyl-L-aspartate(89)-[ribosomal protein uS12]-hydrogen + (sulfur carrier)-H + 5'-deoxyadenosine + L-methionine + A + S-adenosyl-L-homocysteine + 2 H(+). Functionally, catalyzes the methylthiolation of an aspartic acid residue of ribosomal protein uS12. In Thermotoga maritima (strain ATCC 43589 / DSM 3109 / JCM 10099 / NBRC 100826 / MSB8), this protein is Ribosomal protein uS12 methylthiotransferase RimO.